The chain runs to 409 residues: Formyl-CoA:oxalate CoA-transferase (409 aa).

Residues glutamine 17–serine 18, leucine 71–lysine 74, asparagine 95–glycine 97, arginine 103, and lysine 135–glutamate 138 each bind CoA. Aspartate 167 (nucleophile) is an active-site residue. The segment at leucine 221–proline 245 is disordered. Glycine 242–glutamine 244 is a substrate binding site.

The protein belongs to the CoA-transferase III family. Frc subfamily. In terms of assembly, homodimer.

The catalysed reaction is formyl-CoA + oxalate = oxalyl-CoA + formate. The protein operates within metabolic intermediate degradation; oxalate degradation; CO(2) and formate from oxalate: step 1/2. Functionally, involved in the catabolism of oxalate and in the adapatation to low pH via the induction of the oxalate-dependent acid tolerance response (ATR). Catalyzes the transfer of the CoA moiety from formyl-CoA to oxalate. The protein is Formyl-CoA:oxalate CoA-transferase of Streptomyces avermitilis (strain ATCC 31267 / DSM 46492 / JCM 5070 / NBRC 14893 / NCIMB 12804 / NRRL 8165 / MA-4680).